We begin with the raw amino-acid sequence, 404 residues long: Clavilactone A biosynthesis cluster protein Y (404 aa).

Its function is as follows. Part of the gene cluster that mediates the biosynthesis of clavilactone A, a meroterpenoid that features a unique benzo-fused ten-membered carbocyclic ring unit with an alpha,beta-epoxy-gamma-lactone moiety, forming an intriguing 10/5/3 tricyclic nested skeleton. ClaR, ClaS and ClaT are sufficient to produce clavilactone A and the function of claY, if any, has still to be identified. The biosynthesis begins with the prenyltransferase claS that transfers geranyl pyrophosphate (GPP) to hydroquinone to produces geranylhydroquinon. The cytochrome P450 monooxygenase claR then catalyzes the diradical coupling reaction between the intramolecular hydroquinone and allyl moieties to form the benzo-fused ten-membered carbocyclic ring unit of wigantol. Finally the cytochrome P450 monooxygenase claT exquisitely and stereoselectively assembles the alpha,beta-epoxy-gamma-lactone moiety, producing clavilactone A via arnebinol A. The protein is Clavilactone A biosynthesis cluster protein Y of Ampulloclitocybe clavipes (Club foot).